Here is a 2812-residue protein sequence, read N- to C-terminus: Zonadhesin (2812 aa).

The N-terminal stretch at 1–17 (MVPPVWTLLLLVGAALF) is a signal peptide. Residues 18 to 2757 (RKEKPPDQKL…DAPPPRKPAS (2740 aa)) are Extracellular-facing. 3 MAM domains span residues 39-204 (TQCD…SCNR), 209-368 (QTCS…PCGE), and 371-536 (PQCD…TCPV). Residues 61 to 84 (EDWVRASGPSPTGSTGAPGGYPNG) form a disordered region. Positions 66-75 (ASGPSPTGST) are enriched in low complexity. Residues Asn333 and Asn493 are each glycosylated (N-linked (GlcNAc...) asparagine). Disordered regions lie at residues 545–884 (VSPV…PTEK) and 904–929 (EKPT…KPTI). Low complexity predominate over residues 547–558 (PVSSTGPSETTG). A compositionally biased stretch (polar residues) spans 559–570 (LTENPTISTKKP). Positions 573–1041 (SIEKPSVTTE…GTTTTSRSST (469 aa)) are 66 X heptapeptide repeats (approximate) (mucin-like domain). 5 stretches are compositionally biased toward low complexity: residues 592–603 (TIPTEKPTISTE), 651–675 (TEKP…MEEP), 713–842 (SPEK…STEK), 853–868 (STEK…TISP), and 916–929 (STEK…KPTI). A TIL 1 domain is found at 1044 to 1093 (CPPNARYESCACPASCKSPRPSCGPLCREGCVCNPGFLFSDNHCIQASSC). The 46-residue stretch at 1103 to 1148 (EPGAEWFSPNCTEHCRCWPGSRVECQISQCGTHTVCQLKNGQYGCH) folds into the VWFC 1 domain. Asn1112 and Asn1188 each carry an N-linked (GlcNAc...) asparagine glycan. The VWFD 1 domain occupies 1154 to 1331 (ATCLVYGDPH…TDQDEDQECQ (178 aa)). 2 cysteine pairs are disulfide-bonded: Cys1156–Cys1291 and Cys1178–Cys1330. A compositionally biased stretch (basic and acidic residues) spans 1302 to 1316 (HLKLDGSPAGDKEEL). Residues 1302 to 1323 (HLKLDGSPAGDKEELGNSWQTD) form a disordered region. One can recognise a TIL 2 domain in the interval 1426–1479 (CPPNSKYSLCAKPCPDTCHSGFSGMFCSDRCVEACECNPGFVLSGLECIPRSQC). One can recognise a VWFC 2 domain in the interval 1480-1535 (GCLHPAGSYFKVGERWYKPGCKELCVCESNNRIRCQPWRCRAQEFCGQQDGIYGCH). A VWFD 2 domain is found at 1540–1720 (ATCTASGDPH…LPESSEPGCF (181 aa)). Cystine bridges form between Cys1542/Cys1680 and Cys1564/Cys1719. 2 N-linked (GlcNAc...) asparagine glycosylation sites follow: Asn1685 and Asn1804. Positions 1812 to 1867 (CPPGSSYSPCSSPCPDTCSSINNPRDCPKALPCAESCECQKGHILSGTSCVPLGQC) constitute a TIL 3 domain. Residues 1868–1924 (GCTDPAGSYHPVGERWYTENTCTRLCTCSVHNNITCFQSTCKPNQICWALDGLLHCR) form the VWFC 3 domain. Residues Asn1900 and Asn1946 are each glycosylated (N-linked (GlcNAc...) asparagine). Residues 1929 to 2108 (GVCQLPGESH…KDKDIDPSCQ (180 aa)) form the VWFD 3 domain. Disulfide bonds link Cys1931-Cys2069 and Cys1953-Cys2107. An N-linked (GlcNAc...) asparagine glycan is attached at Asn2203. The TIL 4 domain maps to 2211–2267 (CPAYSSYTNCLPSCSPSCWDLDGRCEGAKVPSACAEGCICQPGYVLSEDKCVPRSQC). Residues 2268–2329 (GCKDAHGGSI…NSNCVSDKSE (62 aa)) enclose the VWFC 4 domain. The 177-residue stretch at 2329–2505 (EQCSVYGDPR…SWEVKTEDAL (177 aa)) folds into the VWFD 4 domain. Cys2331 and Cys2468 are oxidised to a cystine. N-linked (GlcNAc...) asparagine glycans are attached at residues Asn2542 and Asn2701. Positions 2652–2797 (CGCTSNGIYY…KREKTQEGDR (146 aa)) constitute a VWFC 5 domain. The EGF-like domain maps to 2708–2744 (PESPCLQNPCQNDGQCREQGATFTCECEVGYGGGLCM). Disulfide bonds link Cys2712/Cys2723, Cys2717/Cys2732, and Cys2734/Cys2743. The chain crosses the membrane as a helical span at residues 2758–2778 (NLVGVLLGLLVPVVVVLLAVT). The Cytoplasmic portion of the chain corresponds to 2779-2812 (RECIYRTRRKREKTQEGDRLARLVDTDTVLDCAC).

In terms of assembly, probably forms covalent oligomers. In terms of tissue distribution, in testis, primarily in haploid spermatids.

It localises to the cell membrane. Its function is as follows. Binds in a species-specific manner to the zona pellucida of the egg. May be involved in gamete recognition and/or signaling. The sequence is that of Zonadhesin (ZAN) from Homo sapiens (Human).